The sequence spans 188 residues: dCTP deaminase (188 aa).

DCTP-binding positions include 111 to 116 (KSTYAR), 135 to 137 (TLE), Gln156, Tyr170, and Gln180. Glu137 acts as the Proton donor/acceptor in catalysis.

Belongs to the dCTP deaminase family. In terms of assembly, homotrimer.

The enzyme catalyses dCTP + H2O + H(+) = dUTP + NH4(+). It functions in the pathway pyrimidine metabolism; dUMP biosynthesis; dUMP from dCTP (dUTP route): step 1/2. Catalyzes the deamination of dCTP to dUTP. This chain is dCTP deaminase, found in Neisseria meningitidis serogroup C / serotype 2a (strain ATCC 700532 / DSM 15464 / FAM18).